Reading from the N-terminus, the 517-residue chain is tRNA-2-methylthio-N(6)-dimethylallyladenosine synthase (517 aa).

Residues 18 to 137 (RTYQVRTYGC…LPTLLDRARH (120 aa)) enclose the MTTase N-terminal domain. 6 residues coordinate [4Fe-4S] cluster: cysteine 27, cysteine 66, cysteine 100, cysteine 174, cysteine 178, and cysteine 181. Residues 160–397 (RESDYAAWVS…ELQEQICMEE (238 aa)) form the Radical SAM core domain. In terms of domain architecture, TRAM spans 399 to 470 (RVLIGRIVEL…PHHLIADAGI (72 aa)).

This sequence belongs to the methylthiotransferase family. MiaB subfamily. Monomer. It depends on [4Fe-4S] cluster as a cofactor.

The protein localises to the cytoplasm. It catalyses the reaction N(6)-dimethylallyladenosine(37) in tRNA + (sulfur carrier)-SH + AH2 + 2 S-adenosyl-L-methionine = 2-methylsulfanyl-N(6)-dimethylallyladenosine(37) in tRNA + (sulfur carrier)-H + 5'-deoxyadenosine + L-methionine + A + S-adenosyl-L-homocysteine + 2 H(+). In terms of biological role, catalyzes the methylthiolation of N6-(dimethylallyl)adenosine (i(6)A), leading to the formation of 2-methylthio-N6-(dimethylallyl)adenosine (ms(2)i(6)A) at position 37 in tRNAs that read codons beginning with uridine. In Mycobacterium leprae (strain TN), this protein is tRNA-2-methylthio-N(6)-dimethylallyladenosine synthase.